A 149-amino-acid chain; its full sequence is Ribonuclease H (149 aa).

One can recognise an RNase H type-1 domain in the interval 1-145; sequence MKKVIIYTDG…CDKLANEAMD (145 aa). Asp-9, Glu-50, Asp-72, and Asp-137 together coordinate Mg(2+).

Belongs to the RNase H family. As to quaternary structure, monomer. Mg(2+) is required as a cofactor.

The protein localises to the cytoplasm. It catalyses the reaction Endonucleolytic cleavage to 5'-phosphomonoester.. Its function is as follows. Endonuclease that specifically degrades the RNA of RNA-DNA hybrids. This Clostridium botulinum (strain ATCC 19397 / Type A) protein is Ribonuclease H.